Consider the following 220-residue polypeptide: Ribonuclease HII (220 aa).

The RNase H type-2 domain occupies 32 to 220 (KHIAGIDEAG…FAPIKGRFDC (189 aa)). 3 residues coordinate a divalent metal cation: D38, E39, and D130.

It belongs to the RNase HII family. Mn(2+) serves as cofactor. It depends on Mg(2+) as a cofactor.

The protein localises to the cytoplasm. The catalysed reaction is Endonucleolytic cleavage to 5'-phosphomonoester.. Functionally, endonuclease that specifically degrades the RNA of RNA-DNA hybrids. The chain is Ribonuclease HII from Brucella canis (strain ATCC 23365 / NCTC 10854 / RM-666).